The following is a 498-amino-acid chain: ATP synthase subunit beta, chloroplastic (498 aa).

Gly-172 to Thr-179 is a binding site for ATP.

This sequence belongs to the ATPase alpha/beta chains family. In terms of assembly, F-type ATPases have 2 components, CF(1) - the catalytic core - and CF(0) - the membrane proton channel. CF(1) has five subunits: alpha(3), beta(3), gamma(1), delta(1), epsilon(1). CF(0) has four main subunits: a(1), b(1), b'(1) and c(9-12).

Its subcellular location is the plastid. It localises to the chloroplast thylakoid membrane. It catalyses the reaction ATP + H2O + 4 H(+)(in) = ADP + phosphate + 5 H(+)(out). Functionally, produces ATP from ADP in the presence of a proton gradient across the membrane. The catalytic sites are hosted primarily by the beta subunits. This is ATP synthase subunit beta, chloroplastic from Nymphaea alba (White water-lily).